A 497-amino-acid polypeptide reads, in one-letter code: 3-octaprenyl-4-hydroxybenzoate carboxy-lyase (497 aa).

Mn(2+) is bound at residue N175. Residues 178 to 180, 192 to 194, and 197 to 198 contribute to the prenylated FMN site; these read IYR, RWL, and RG. E241 lines the Mn(2+) pocket. D290 functions as the Proton donor in the catalytic mechanism.

The protein belongs to the UbiD family. As to quaternary structure, homohexamer. Prenylated FMN is required as a cofactor. The cofactor is Mn(2+).

The protein localises to the cell membrane. It carries out the reaction a 4-hydroxy-3-(all-trans-polyprenyl)benzoate + H(+) = a 2-(all-trans-polyprenyl)phenol + CO2. Its pathway is cofactor biosynthesis; ubiquinone biosynthesis. In terms of biological role, catalyzes the decarboxylation of 3-octaprenyl-4-hydroxy benzoate to 2-octaprenylphenol, an intermediate step in ubiquinone biosynthesis. This is 3-octaprenyl-4-hydroxybenzoate carboxy-lyase from Shigella sonnei (strain Ss046).